The sequence spans 145 residues: Extracellular globin-2 (145 aa).

The region spanning 3–145 (QCGVLEGLKV…HIEDGIKGHH (143 aa)) is the Globin domain. A disulfide bond links cysteine 4 and cysteine 133. Histidine 96 is a binding site for heme b.

The protein belongs to the globin family. In terms of assembly, the extracellular hemoglobin of the earthworm consists of 12 subunits that have a hexagonal bilayer structure with a molecular weight near 3.8 million. Each one-twelfth subunit is composed primarily of disulfide linked trimers (chains A, B, and C) and monomers (chain D).

This Lumbricus terrestris (Common earthworm) protein is Extracellular globin-2.